The chain runs to 1046 residues: Suppressor of Mek1 (1046 aa).

Residues 1–101 (MEPLRKRVKV…QDIWENILQY (101 aa)) enclose the WH1 domain. The segment at 626 to 1046 (FESPETSCNN…SSPTPSELHV (421 aa)) is disordered. A compositionally biased stretch (acidic residues) spans 665–689 (IDEEEEEAYFNRDDDSEDSDDEDEL). Over residues 695-713 (NNNNNNNNNNKQICTNNEN) the composition is skewed to low complexity. A compositionally biased stretch (basic and acidic residues) spans 714 to 727 (NMEKNDDNIEKDNE). Over residues 743 to 752 (YEDEDDEDDE) the composition is skewed to acidic residues. Over residues 753 to 783 (INKSVESDDIVEKHEIIDKNEKKDEIMKENN) the composition is skewed to basic and acidic residues. Residues 784 to 803 (DSDNDDNDNNDNDNDNDNNS) are compositionally biased toward acidic residues. Low complexity predominate over residues 804-820 (DIENKNHLNNNGNNENN). Basic and acidic residues-rich tracts occupy residues 826 to 855 (VQDK…KENL) and 862 to 876 (EKVK…KKEN). The segment covering 889-905 (SNNSNNNNNNNNNNSNN) has biased composition (low complexity). The segment covering 909–935 (GDNRKTTPKRKLDYEKNESVVSKKIDK) has biased composition (basic and acidic residues). Low complexity predominate over residues 958–995 (NNNNSNNNNNNNNNNNNNNNNNNNNNNNNNNNNNNNQN). Over residues 996 to 1011 (DENELSSASEEEEEQL) the composition is skewed to acidic residues. The Nuclear localization signal signature appears at 1003–1022 (ASEEEEEQLENGKHIKKFKR). A compositionally biased stretch (low complexity) spans 1028–1038 (NNSSNNSNNSS).

It belongs to the SMEK family. Interacts with ppp4c.

It is found in the cytoplasm. The protein resides in the cell cortex. Its subcellular location is the nucleus. Functionally, suppresses MEK1 null cell polarity, chemotaxis, and gene expression defects. Required for proper cytokinesis during vegetative growth, timely exit from the mound stage during development, and myosin II assembly. May be a regulatory subunit of serine/threonine-protein phosphatase 4 (PP4) and may control localization of PP4 to the nucleus. Involved in the regulation of some ppp4c functions, such as developmental progression, chemotaxis, expression of stress response genes and cell movement. This is Suppressor of Mek1 (smkA) from Dictyostelium discoideum (Social amoeba).